A 427-amino-acid polypeptide reads, in one-letter code: Adenylosuccinate synthetase (427 aa).

Residues 12-18 and 40-42 each bind GTP; these read GDEGKGK and GHT. The active-site Proton acceptor is D13. Mg(2+) contacts are provided by D13 and G40. IMP contacts are provided by residues 13–16, 38–41, T130, R144, Q224, T239, and R303; these read DEGK and NAGH. The active-site Proton donor is the H41. A substrate-binding site is contributed by 299 to 305; it reads VTTGRAR. Residues R305, 331-333, and 413-415 each bind GTP; these read KID and SVG.

Belongs to the adenylosuccinate synthetase family. Homodimer. Mg(2+) serves as cofactor.

It localises to the cytoplasm. It catalyses the reaction IMP + L-aspartate + GTP = N(6)-(1,2-dicarboxyethyl)-AMP + GDP + phosphate + 2 H(+). It participates in purine metabolism; AMP biosynthesis via de novo pathway; AMP from IMP: step 1/2. Plays an important role in the de novo pathway of purine nucleotide biosynthesis. Catalyzes the first committed step in the biosynthesis of AMP from IMP. The polypeptide is Adenylosuccinate synthetase (Clostridium novyi (strain NT)).